The following is a 60-amino-acid chain: Large ribosomal subunit protein uL30 (60 aa).

This sequence belongs to the universal ribosomal protein uL30 family. In terms of assembly, part of the 50S ribosomal subunit.

The chain is Large ribosomal subunit protein uL30 from Limosilactobacillus fermentum (strain NBRC 3956 / LMG 18251) (Lactobacillus fermentum).